The primary structure comprises 343 residues: Probable dual-specificity RNA methyltransferase RlmN (343 aa).

The active-site Proton acceptor is glutamate 91. The Radical SAM core domain maps to 97 to 326; it reads HPGRITACIS…AEIRQEKGSD (230 aa). The cysteines at positions 104 and 331 are disulfide-linked. [4Fe-4S] cluster-binding residues include cysteine 111, cysteine 115, and cysteine 118. S-adenosyl-L-methionine-binding positions include 158–159, serine 190, 213–215, and asparagine 289; these read GE and SLH. The active-site S-methylcysteine intermediate is the cysteine 331.

Belongs to the radical SAM superfamily. RlmN family. Requires [4Fe-4S] cluster as cofactor.

The protein localises to the cytoplasm. It carries out the reaction adenosine(2503) in 23S rRNA + 2 reduced [2Fe-2S]-[ferredoxin] + 2 S-adenosyl-L-methionine = 2-methyladenosine(2503) in 23S rRNA + 5'-deoxyadenosine + L-methionine + 2 oxidized [2Fe-2S]-[ferredoxin] + S-adenosyl-L-homocysteine. The enzyme catalyses adenosine(37) in tRNA + 2 reduced [2Fe-2S]-[ferredoxin] + 2 S-adenosyl-L-methionine = 2-methyladenosine(37) in tRNA + 5'-deoxyadenosine + L-methionine + 2 oxidized [2Fe-2S]-[ferredoxin] + S-adenosyl-L-homocysteine. Its function is as follows. Specifically methylates position 2 of adenine 2503 in 23S rRNA and position 2 of adenine 37 in tRNAs. In Thermotoga neapolitana (strain ATCC 49049 / DSM 4359 / NBRC 107923 / NS-E), this protein is Probable dual-specificity RNA methyltransferase RlmN.